The primary structure comprises 136 residues: uncharacterized protein (136 aa).

Positions 74-97 (RADPGRKGRTQPLPTQGSARRFLH) are disordered.

This is an uncharacterized protein from Saccharomyces cerevisiae (strain ATCC 204508 / S288c) (Baker's yeast).